A 488-amino-acid polypeptide reads, in one-letter code: Glycogen synthase (488 aa).

K17 lines the ADP-alpha-D-glucose pocket.

It belongs to the glycosyltransferase 1 family. Bacterial/plant glycogen synthase subfamily.

The catalysed reaction is [(1-&gt;4)-alpha-D-glucosyl](n) + ADP-alpha-D-glucose = [(1-&gt;4)-alpha-D-glucosyl](n+1) + ADP + H(+). Its pathway is glycan biosynthesis; glycogen biosynthesis. Functionally, synthesizes alpha-1,4-glucan chains using ADP-glucose. The polypeptide is Glycogen synthase (Nitratidesulfovibrio vulgaris (strain DSM 19637 / Miyazaki F) (Desulfovibrio vulgaris)).